Consider the following 189-residue polypeptide: EIEFTRTMHGIMRNISHFCSRTKSRTWGKDGWQKIVVCVIADGRQNVHPRTLNALAAMGVYQDGIAKNEVNSKEVTAHVYEYTTQVSLDETLKFKGAEKGTVPCQDVFCLKEKNKKKLNSHRWFFNAFGRALTPNVCILLDVGTKPDSKALYHLWKAFDQDSNVAGAAGEIKADKGKGWMGLLNPLVAS.

This sequence belongs to the chitin synthase family. Class II subfamily.

The protein localises to the cell membrane. The catalysed reaction is [(1-&gt;4)-N-acetyl-beta-D-glucosaminyl](n) + UDP-N-acetyl-alpha-D-glucosamine = [(1-&gt;4)-N-acetyl-beta-D-glucosaminyl](n+1) + UDP + H(+). In terms of biological role, polymerizes chitin, a structural polymer of the cell wall and septum, by transferring the sugar moiety of UDP-GlcNAc to the non-reducing end of the growing chitin polymer. This Xylohypha bantiana protein is Chitin synthase 2 (CHS2).